The following is a 132-amino-acid chain: Large-conductance mechanosensitive channel (132 aa).

A run of 3 helical transmembrane segments spans residues Val14–Leu34, Ile38–Gly58, and Gly67–Val87.

This sequence belongs to the MscL family. As to quaternary structure, homopentamer.

The protein resides in the cell membrane. Functionally, channel that opens in response to stretch forces in the membrane lipid bilayer. May participate in the regulation of osmotic pressure changes within the cell. The chain is Large-conductance mechanosensitive channel from Bacillus cereus (strain ATCC 10987 / NRS 248).